The sequence spans 136 residues: Acidic phospholipase A2 EC-I (136 aa).

A signal peptide spans Met-1–Gly-16. 7 disulfide bridges follow: Cys-42–Cys-129, Cys-44–Cys-60, Cys-59–Cys-111, Cys-65–Cys-136, Cys-66–Cys-104, Cys-73–Cys-97, and Cys-91–Cys-102. Tyr-43, Gly-45, and Gly-47 together coordinate Ca(2+). His-63 is a catalytic residue. Asp-64 provides a ligand contact to Ca(2+). Asp-105 is an active-site residue. Residues Leu-112 to Val-133 form a may be responsible for inhibition of the platelet-aggregation activity region.

It belongs to the phospholipase A2 family. Group II subfamily. D49 sub-subfamily. Monomer. Requires Ca(2+) as cofactor. Expressed by the venom gland.

The protein localises to the secreted. The catalysed reaction is a 1,2-diacyl-sn-glycero-3-phosphocholine + H2O = a 1-acyl-sn-glycero-3-phosphocholine + a fatty acid + H(+). Snake venom phospholipase A2 (PLA2) that inhibits human platelet aggregation induced by ADP, collagen and epinephrin (possibly by binding the platelet receptor alpha-IIb/beta-III) and induces mild edema in the foot pads of mice. PLA2 catalyzes the calcium-dependent hydrolysis of the 2-acyl groups in 3-sn-phosphoglycerides. This chain is Acidic phospholipase A2 EC-I, found in Echis carinatus (Saw-scaled viper).